We begin with the raw amino-acid sequence, 507 residues long: Histidine ammonia-lyase (507 aa).

A cross-link (5-imidazolinone (Ala-Gly)) is located at residues 143-145 (ASG). Ser144 bears the 2,3-didehydroalanine (Ser) mark.

It belongs to the PAL/histidase family. In terms of processing, contains an active site 4-methylidene-imidazol-5-one (MIO), which is formed autocatalytically by cyclization and dehydration of residues Ala-Ser-Gly.

The protein localises to the cytoplasm. The catalysed reaction is L-histidine = trans-urocanate + NH4(+). It participates in amino-acid degradation; L-histidine degradation into L-glutamate; N-formimidoyl-L-glutamate from L-histidine: step 1/3. This chain is Histidine ammonia-lyase, found in Alkaliphilus oremlandii (strain OhILAs) (Clostridium oremlandii (strain OhILAs)).